A 399-amino-acid chain; its full sequence is Elongation factor Tu (399 aa).

The tr-type G domain occupies 10–204; it reads KPHVNIGTIG…SVDESIPEPE (195 aa). Residues 19 to 26 are G1; the sequence is GHVDHGKT. 19–26 lines the GTP pocket; it reads GHVDHGKT. T26 contributes to the Mg(2+) binding site. Residues 60–64 form a G2 region; the sequence is GITIN. The tract at residues 81–84 is G3; sequence DCPG. Residues 81–85 and 136–139 contribute to the GTP site; these read DCPGH and NKCD. Residues 136-139 are G4; it reads NKCD. The G5 stretch occupies residues 174–176; it reads SAL.

The protein belongs to the TRAFAC class translation factor GTPase superfamily. Classic translation factor GTPase family. EF-Tu/EF-1A subfamily. Monomer.

Its subcellular location is the cytoplasm. It carries out the reaction GTP + H2O = GDP + phosphate + H(+). Its function is as follows. GTP hydrolase that promotes the GTP-dependent binding of aminoacyl-tRNA to the A-site of ribosomes during protein biosynthesis. In Prochlorococcus marinus (strain MIT 9211), this protein is Elongation factor Tu.